Consider the following 485-residue polypeptide: MITDLTFTQLRDKLKNKELSSLQILRAFKDEYEKDLKHPLPLNGFVEFFEDAEEHAKKADELIAQGVSFDEKPLLGLPIAVKDNISMAGKLCTCCSRSLQGYYAPYNATVIDRLLEAGAVLMGRINMDELAMGSSTEFSCYGPSRNPVDRARTPGGSSGGSAAVVAGNQAPFSLGTETGGSVRLPASYCGIYGLKPTYGLFSRYGVVAFSSSLDQVGLFGKEAADIALGLAVMAGKDEKDETSEEADFSSLLKLSAYSKEEIASLKIAIPKEFLNTQGLDQEVKQVFDELCAWLTKNGAKLEEVSIPVLEASIPTYYTLAISEAASNLSRIDGIRFGLRKDTGKGNDELYIQTRSEGFGPEVKRRIITGNYVLSKEFSGDCYEKSLNVRAKIAQGVNEVLQKYDFIICPTAPAPAFKLNEKVDDPIAMYLSDLFTTFVNLARIPSLSVPAGKTKAGLPVGIQFCGKKFSEDRILKLAKAWEEQNA.

Active-site charge relay system residues include K82 and S157. Catalysis depends on S181, which acts as the Acyl-ester intermediate.

It belongs to the amidase family. GatA subfamily. As to quaternary structure, heterotrimer of A, B and C subunits.

It carries out the reaction L-glutamyl-tRNA(Gln) + L-glutamine + ATP + H2O = L-glutaminyl-tRNA(Gln) + L-glutamate + ADP + phosphate + H(+). Functionally, allows the formation of correctly charged Gln-tRNA(Gln) through the transamidation of misacylated Glu-tRNA(Gln) in organisms which lack glutaminyl-tRNA synthetase. The reaction takes place in the presence of glutamine and ATP through an activated gamma-phospho-Glu-tRNA(Gln). In Treponema denticola (strain ATCC 35405 / DSM 14222 / CIP 103919 / JCM 8153 / KCTC 15104), this protein is Glutamyl-tRNA(Gln) amidotransferase subunit A.